We begin with the raw amino-acid sequence, 574 residues long: MANPPHGGVLKDLIARDAPRRQELYAEAEKLPAIVLSDRQLCDLELILNGGFSPLEGFMNEKDYTGVVAENRLADGNLFSIPITLDVSKETIDEVGVKAGARIALRDSRDDRNLAIITVDDIYKPDKVKEANEVFGDNDEAHPAVKYLHHTAKEFYVGGKVEAIDRLEHYDYVGLRYTPAELRLHFDKLGWQKVVAFQTRNPMHRAHRELTVRAARARQANVLIHPVVGLTKPGDIDHFTRVRVYQALMPRYPNGMAVLALLPLAMRMGGPREAIWHAIIRKNHGATHFIVGRDHAGPGKNSKGVDFYGPYDAQDAVEKYRDELGIEVVPFQQMTYLPDSDEYKPKDEVAKDIKTLDISGTELRKRLRTGQEIPEWFSYPEVVKVLRESHPPRNQQGFTVFLTGYQNSGKDAIARALNVTLNQQGGRSVSLLLGETVRSELSSELGFSREDRDKNIARIAFVAAELTKAGAAAIVAPIAPFQKSRQQARETVEKYGSFFLVHVATPLDHAEKTDRRGVYAKARAGEIKGFTGVDDPYEAPENADLVVDTSKTNVRTAVHQIVLLLESQGLLTQL.

The N-terminal stretch occupies residues 1–170; the sequence is MANPPHGGVL…VEAIDRLEHY (170 aa). Positions 171–395 are catalytic; it reads DYVGLRYTPA…LRESHPPRNQ (225 aa). A sulfate-binding site is contributed by glutamine 198. ATP contacts are provided by residues 198 to 201 and 292 to 295; these read QTRN and GRDH. Active-site residues include threonine 199, arginine 200, and asparagine 201. Arginine 200 is a binding site for sulfate. Sulfate is bound at residue alanine 296. Methionine 334 contacts ATP. The segment at 396–574 is allosteric regulation domain; adenylyl-sulfate kinase-like; it reads QGFTVFLTGY…LESQGLLTQL (179 aa). 3'-phosphoadenylyl sulfate contacts are provided by residues 435–438, arginine 452, 478–479, and arginine 516; these read ETVR and IA.

It in the N-terminal section; belongs to the sulfate adenylyltransferase family. In the C-terminal section; belongs to the APS kinase family. Homohexamer. Dimer of trimers.

It is found in the cytoplasm. The catalysed reaction is sulfate + ATP + H(+) = adenosine 5'-phosphosulfate + diphosphate. It functions in the pathway sulfur metabolism; hydrogen sulfide biosynthesis; sulfite from sulfate: step 1/3. Allosterically inhibited by 3'-phosphoadenosine 5'-phosphosulfate (PAPS). In terms of biological role, catalyzes the first intracellular reaction of sulfate assimilation, forming adenosine-5'-phosphosulfate (APS) from inorganic sulfate and ATP. Plays an important role in sulfate activation as a component of the biosynthesis pathway of sulfur-containing amino acids. The protein is Sulfate adenylyltransferase of Phaeosphaeria nodorum (strain SN15 / ATCC MYA-4574 / FGSC 10173) (Glume blotch fungus).